The sequence spans 467 residues: Argininosuccinate lyase (467 aa).

It belongs to the lyase 1 family. Argininosuccinate lyase subfamily.

The protein localises to the cytoplasm. It catalyses the reaction 2-(N(omega)-L-arginino)succinate = fumarate + L-arginine. It functions in the pathway amino-acid biosynthesis; L-arginine biosynthesis; L-arginine from L-ornithine and carbamoyl phosphate: step 3/3. The chain is Argininosuccinate lyase from Methylibium petroleiphilum (strain ATCC BAA-1232 / LMG 22953 / PM1).